The following is a 317-amino-acid chain: Secreted mono- and diacylglycerol lipase 3 (317 aa).

An N-terminal signal peptide occupies residues 1–29; the sequence is MMFADDLVRMAVLRFITVALAAITNVANA. Cysteines 61 and 310 form a disulfide. Asparagine 108 is a glycosylation site (N-linked (GlcNAc...) asparagine). The active-site Nucleophile is serine 175. N-linked (GlcNAc...) asparagine glycosylation occurs at asparagine 194. The active site involves aspartate 234. Asparagine 258 carries an N-linked (GlcNAc...) asparagine glycan. The active site involves histidine 294.

It belongs to the AB hydrolase superfamily. Lipase family. Class 3 subfamily.

The protein localises to the secreted. The catalysed reaction is a monoacylglycerol + H2O = glycerol + a fatty acid + H(+). It carries out the reaction a diacylglycerol + H2O = a monoacylglycerol + a fatty acid + H(+). Its function is as follows. Secreted mono- and diacylglycerol lipase involved in plant virulence. Has a substrate preference for p-nitrophenyl esters with a carbon chain length of C10 (p-nitrophenyl caprate). The sequence is that of Secreted mono- and diacylglycerol lipase 3 from Gibberella zeae (strain ATCC MYA-4620 / CBS 123657 / FGSC 9075 / NRRL 31084 / PH-1) (Wheat head blight fungus).